The primary structure comprises 211 residues: CASP-like protein 3A1 (211 aa).

Residues 1-45 are Cytoplasmic-facing; it reads MGSIGNGRSDSVVGIQMPPAGSKMVLEPEALQVTTSPVPRWPRLG. Residues 46–66 form a helical membrane-spanning segment; sequence VVMVATRAVAMVMALLSMSLM. At 67-95 the chain is on the extracellular side; it reads VSSKQRGILTIFGIEIPLDANWSFSYSLQ. N-linked (GlcNAc...) asparagine glycosylation occurs at Asn87. A helical membrane pass occupies residues 96 to 116; it reads FLVAMSTASAAYSLAQLLLIA. Residues 117 to 131 are Cytoplasmic-facing; it reads HKAVKKSPIVPSRRH. The helical transmembrane segment at 132–152 threads the bilayer; the sequence is AWLLFAGDQVFSLAMMSAGSA. The Extracellular segment spans residues 153–186; it reads AAAVANLNRTGIRHTALPNFCKPLPRFCDLSAVS. A glycan (N-linked (GlcNAc...) asparagine) is linked at Asn160. Residues 187 to 207 form a helical membrane-spanning segment; it reads IACAFLSCVFLAASAVIDVIW. Over 208–211 the chain is Cytoplasmic; that stretch reads LSSP.

Belongs to the Casparian strip membrane proteins (CASP) family. In terms of assembly, homodimer and heterodimers.

The protein localises to the cell membrane. The polypeptide is CASP-like protein 3A1 (Sorghum bicolor (Sorghum)).